Consider the following 89-residue polypeptide: Small ribosomal subunit protein uS15 (89 aa).

This sequence belongs to the universal ribosomal protein uS15 family. Part of the 30S ribosomal subunit. Forms a bridge to the 50S subunit in the 70S ribosome, contacting the 23S rRNA.

Its function is as follows. One of the primary rRNA binding proteins, it binds directly to 16S rRNA where it helps nucleate assembly of the platform of the 30S subunit by binding and bridging several RNA helices of the 16S rRNA. In terms of biological role, forms an intersubunit bridge (bridge B4) with the 23S rRNA of the 50S subunit in the ribosome. The polypeptide is Small ribosomal subunit protein uS15 (Brucella abortus (strain S19)).